A 541-amino-acid polypeptide reads, in one-letter code: Effector protein hopAB1 (541 aa).

3 disordered regions span residues 1-94 (MPGI…EAQQ), 168-222 (QRAL…RHPQ), and 317-338 (RQTTTNSPELPPLASSAESGRR). The span at 18–31 (TDGEPVTEREHDSS) shows a compositional bias: basic and acidic residues. Low complexity predominate over residues 183–196 (SSSGSSQRSLIGRS).

It belongs to the HopAB family.

Its subcellular location is the secreted. Its function is as follows. Effector protein that plays different roles depending on the species and plant cultivars that interact with the pathogen. Acts as a virulence determinant by enhancing the development of disease symptoms and bacterial growth. Acts as an avirulence factor by eliciting hypersensitive response (HR) and plant resistance. The polypeptide is Effector protein hopAB1 (hopAB1) (Pseudomonas savastanoi (Pseudomonas syringae pv. savastanoi)).